The chain runs to 601 residues: tRNA 5-methylaminomethyl-2-thiouridine biosynthesis bifunctional protein MnmC (601 aa).

Residues 1–237 (MSDPTASPLI…KKQRLEAVAP (237 aa)) are tRNA (mnm(5)s(2)U34)-methyltransferase. The FAD-dependent cmnm(5)s(2)U34 oxidoreductase stretch occupies residues 252–601 (IGGGIAGAAM…FSSRVATGAV (350 aa)).

This sequence in the N-terminal section; belongs to the methyltransferase superfamily. tRNA (mnm(5)s(2)U34)-methyltransferase family. It in the C-terminal section; belongs to the DAO family. FAD is required as a cofactor.

It is found in the cytoplasm. It carries out the reaction 5-aminomethyl-2-thiouridine(34) in tRNA + S-adenosyl-L-methionine = 5-methylaminomethyl-2-thiouridine(34) in tRNA + S-adenosyl-L-homocysteine + H(+). Functionally, catalyzes the last two steps in the biosynthesis of 5-methylaminomethyl-2-thiouridine (mnm(5)s(2)U) at the wobble position (U34) in tRNA. Catalyzes the FAD-dependent demodification of cmnm(5)s(2)U34 to nm(5)s(2)U34, followed by the transfer of a methyl group from S-adenosyl-L-methionine to nm(5)s(2)U34, to form mnm(5)s(2)U34. This is tRNA 5-methylaminomethyl-2-thiouridine biosynthesis bifunctional protein MnmC from Caulobacter sp. (strain K31).